The primary structure comprises 150 residues: UPF0208 membrane protein VS_0999 (150 aa).

2 consecutive transmembrane segments (helical) span residues 42–62 (FGVKVMPAIAAISVLTQMVFN) and 70–90 (AVVMALFAISLPLQGMWWLGN).

It belongs to the UPF0208 family.

Its subcellular location is the cell inner membrane. This Vibrio atlanticus (strain LGP32) (Vibrio splendidus (strain Mel32)) protein is UPF0208 membrane protein VS_0999.